The primary structure comprises 310 residues: Ribosomal RNA small subunit methyltransferase H (310 aa).

S-adenosyl-L-methionine is bound by residues 33–35 (AGH), Asp-53, Tyr-83, Asp-100, and Gln-107.

It belongs to the methyltransferase superfamily. RsmH family.

The protein resides in the cytoplasm. The enzyme catalyses cytidine(1402) in 16S rRNA + S-adenosyl-L-methionine = N(4)-methylcytidine(1402) in 16S rRNA + S-adenosyl-L-homocysteine + H(+). In terms of biological role, specifically methylates the N4 position of cytidine in position 1402 (C1402) of 16S rRNA. The protein is Ribosomal RNA small subunit methyltransferase H of Clostridium perfringens (strain ATCC 13124 / DSM 756 / JCM 1290 / NCIMB 6125 / NCTC 8237 / Type A).